The chain runs to 566 residues: Putative pentatricopeptide repeat-containing protein At1g28020 (566 aa).

PPR repeat units follow at residues 136-171 (GDSVYTSLLNSYARSDKTLCKAEATFQKMRDLGLLL), 172-206 (RPVPYNAMMSLYSALKNREKVEELLLEMKDNDVEA), 207-242 (DNVTVNNVLKLYSAVCDVTEMEKFLNKWEGIHGIKL), 243-273 (EWHTTLDMAKAYLRARSSGKAMKMLRLTEQL), 279-309 (LKSAYDHLMKLYGEAGNREEVLRVWKLYKSK), 314-348 (DNNGYRTVIRSLLKVDDIVGAEEIYKVWESLPLEF), 349-385 (DHRIPTMLASGYRDRGMTEKAEKLMNSKTIKDRRMNK), 468-504 (DYSVYVALLSSYAKSDKNLGNMVDEILREMEENNVDP), and 505-540 (DLITVNHVLKVYAAESKIQAMEMFMRRWGTEDGIKL).

Belongs to the PPR family. P subfamily.

The chain is Putative pentatricopeptide repeat-containing protein At1g28020 from Arabidopsis thaliana (Mouse-ear cress).